A 264-amino-acid polypeptide reads, in one-letter code: MNVQVSPDSLVIAGKTYGSRLLTGTGKFKDLEETRLATEAAGAQIVTVAIRRTNIGQNPGEPNLLDVLPPERFTILPNTAGCYTAEDAVRTCRLARELLDGHNLTKLEVLGDQKSLYPDVVQTLKAAEQLVKDGFEVMVYTSDDPILAKRLEEIGCAAVMPLAAPIGSGLGIQNKYNLLQIIEDAKVPIIVDAGVGTASDAAIAMELGCDGVLMNTAIAGARHPVLMASAMRKAVEAGREAFLAGRIPRKRYASASSPIDGLIG.

Lys106 serves as the catalytic Schiff-base intermediate with DXP. 1-deoxy-D-xylulose 5-phosphate-binding positions include Gly167, 193 to 194, and 215 to 216; these read AG and NT.

Belongs to the ThiG family. Homotetramer. Forms heterodimers with either ThiH or ThiS.

Its subcellular location is the cytoplasm. It carries out the reaction [ThiS sulfur-carrier protein]-C-terminal-Gly-aminoethanethioate + 2-iminoacetate + 1-deoxy-D-xylulose 5-phosphate = [ThiS sulfur-carrier protein]-C-terminal Gly-Gly + 2-[(2R,5Z)-2-carboxy-4-methylthiazol-5(2H)-ylidene]ethyl phosphate + 2 H2O + H(+). Its pathway is cofactor biosynthesis; thiamine diphosphate biosynthesis. Its function is as follows. Catalyzes the rearrangement of 1-deoxy-D-xylulose 5-phosphate (DXP) to produce the thiazole phosphate moiety of thiamine. Sulfur is provided by the thiocarboxylate moiety of the carrier protein ThiS. In vitro, sulfur can be provided by H(2)S. This is Thiazole synthase from Stenotrophomonas maltophilia (strain R551-3).